A 291-amino-acid chain; its full sequence is 4-hydroxy-tetrahydrodipicolinate synthase (291 aa).

T45 contributes to the pyruvate binding site. Y131 (proton donor/acceptor) is an active-site residue. The Schiff-base intermediate with substrate role is filled by K159. I202 provides a ligand contact to pyruvate.

Belongs to the DapA family. Homotetramer; dimer of dimers.

It is found in the cytoplasm. The catalysed reaction is L-aspartate 4-semialdehyde + pyruvate = (2S,4S)-4-hydroxy-2,3,4,5-tetrahydrodipicolinate + H2O + H(+). Its pathway is amino-acid biosynthesis; L-lysine biosynthesis via DAP pathway; (S)-tetrahydrodipicolinate from L-aspartate: step 3/4. In terms of biological role, catalyzes the condensation of (S)-aspartate-beta-semialdehyde [(S)-ASA] and pyruvate to 4-hydroxy-tetrahydrodipicolinate (HTPA). The sequence is that of 4-hydroxy-tetrahydrodipicolinate synthase from Methanococcoides burtonii (strain DSM 6242 / NBRC 107633 / OCM 468 / ACE-M).